We begin with the raw amino-acid sequence, 205 residues long: N-(5'-phosphoribosyl)anthranilate isomerase (205 aa).

This sequence belongs to the TrpF family.

The catalysed reaction is N-(5-phospho-beta-D-ribosyl)anthranilate = 1-(2-carboxyphenylamino)-1-deoxy-D-ribulose 5-phosphate. It participates in amino-acid biosynthesis; L-tryptophan biosynthesis; L-tryptophan from chorismate: step 3/5. The protein is N-(5'-phosphoribosyl)anthranilate isomerase of Clostridium acetobutylicum (strain ATCC 824 / DSM 792 / JCM 1419 / IAM 19013 / LMG 5710 / NBRC 13948 / NRRL B-527 / VKM B-1787 / 2291 / W).